The following is a 509-amino-acid chain: Cobyric acid synthase (509 aa).

Positions 262–459 constitute a GATase cobBQ-type domain; sequence EIKVGIIKLP…IHGIFENDIW (198 aa). The active-site Nucleophile is C343. H451 is a catalytic residue.

It belongs to the CobB/CobQ family. CobQ subfamily.

It participates in cofactor biosynthesis; adenosylcobalamin biosynthesis. In terms of biological role, catalyzes amidations at positions B, D, E, and G on adenosylcobyrinic A,C-diamide. NH(2) groups are provided by glutamine, and one molecule of ATP is hydrogenolyzed for each amidation. This is Cobyric acid synthase from Prochlorococcus marinus (strain MIT 9312).